The chain runs to 496 residues: Cyclin-dependent kinase 16 (496 aa).

The disordered stretch occupies residues methionine 1–valine 97. Serine 12 carries the post-translational modification Phosphoserine; by BRSK2. Phosphoserine is present on residues serine 36, serine 42, serine 64, serine 65, serine 78, serine 82, and serine 89. Residues isoleucine 69–serine 78 are compositionally biased toward basic and acidic residues. Positions aspartate 83 to valine 93 are enriched in polar residues. The residue at position 95 (serine 95) is a Phosphoserine; by CDK5. Phosphoserine occurs at positions 110, 119, 138, 146, 153, and 155. Residues tyrosine 165–phenylalanine 446 enclose the Protein kinase domain. Residues leucine 171–valine 179 and lysine 194 each bind ATP. Position 175 is a phosphothreonine (threonine 175). Aspartate 286 acts as the Proton acceptor in catalysis. Position 380 is a phosphothreonine (threonine 380). Phosphoserine is present on residues serine 391, serine 478, and serine 480.

Belongs to the protein kinase superfamily. CMGC Ser/Thr protein kinase family. CDC2/CDKX subfamily. As to quaternary structure, found in a complex containing CABLES1, CDK17 and TDRD7. Interacts with BRSK2. Identified in a complex with NSF, syntaxin-1, synaptotagmin, SYN1, SYP and CDK5R1. Interacts with YWHAH, YWHAQ and YWHAZ. Interacts with CCNY; this interaction increases the CDK16 kinase activity. Interacts with CCNYL1; this interaction mutually increases the stability of CDK16 and CCNYL1 and increases the kinase activity of CDK16. Interacts with NSF. Post-translationally, phosphorylation of CDK16 is essential for the binding of CCNY, but also essential for the regulation of CDK16 kinase activity. Phosphorylation of CDK16 is essential for the binding of CCNYl1, but also essential for the regulation of CDK16 kinase activity. Ser-146 and Ser-153 are the most critical sites for the binding of CCNYL1 and for modulating CDK16 kinase activity. Phosphorylation at Ser-153 inhibits kinase activity. In terms of tissue distribution, detected in pancreas islets (at protein level). Detected in brain and pancreas.

It localises to the cytoplasm. It is found in the cytoplasmic vesicle. Its subcellular location is the secretory vesicle. The protein resides in the cell membrane. The protein localises to the synapse. It localises to the synaptosome. It carries out the reaction L-seryl-[protein] + ATP = O-phospho-L-seryl-[protein] + ADP + H(+). It catalyses the reaction L-threonyl-[protein] + ATP = O-phospho-L-threonyl-[protein] + ADP + H(+). In terms of biological role, protein kinase that plays a role in vesicle-mediated transport processes and exocytosis. Regulates GH1 release by brain neurons. Phosphorylates NSF, and thereby regulates NSF oligomerization. Required for normal spermatogenesis. Regulates neuron differentiation and dendrite development. Plays a role in the regulation of insulin secretion in response to changes in blood glucose levels. Can phosphorylate CCNY at 'Ser-336' (in vitro). This is Cyclin-dependent kinase 16 (CDK16) from Homo sapiens (Human).